The following is a 532-amino-acid chain: Flavin-containing monooxygenase 3 (532 aa).

Residues 9-13, E32, 40-41, and 61-62 contribute to the FAD site; these read GAGVS, LW, and NS. NADP(+) contacts are provided by residues 60 to 61 and 195 to 198; these read TN and SGCD. S401 carries the post-translational modification Phosphoserine. A helical transmembrane segment spans residues 510 to 530; it reads FFFHWLKPFAIPILLIAVFLG.

The protein belongs to the FMO family. Requires FAD as cofactor. As to expression, liver.

It is found in the microsome membrane. Its subcellular location is the endoplasmic reticulum membrane. It carries out the reaction trimethylamine + NADPH + O2 = trimethylamine N-oxide + NADP(+) + H2O. The enzyme catalyses N,N-dimethylaniline + NADPH + O2 + H(+) = N,N-dimethylaniline N-oxide + NADP(+) + H2O. It catalyses the reaction hypotaurine + NADPH + O2 + H(+) = taurine + NADP(+) + H2O. The catalysed reaction is (S)-nicotine + NADPH + O2 = trans-(S)-nicotine N(1')-oxide + NADP(+) + H2O. It carries out the reaction albendazole + NADPH + O2 + H(+) = albendazole S-oxide + NADP(+) + H2O. Functionally, essential hepatic enzyme that catalyzes the oxygenation of a wide variety of nitrogen- and sulfur-containing compounds including drugs as well as dietary compounds. Plays an important role in the metabolism of trimethylamine (TMA), via the production of trimethylamine N-oxide (TMAO) metabolite. TMA is generated by the action of gut microbiota using dietary precursors such as choline, choline containing compounds, betaine or L-carnitine. By regulating TMAO concentration, FMO3 directly impacts both platelet responsiveness and rate of thrombus formation. The chain is Flavin-containing monooxygenase 3 (FMO3) from Macaca mulatta (Rhesus macaque).